A 210-amino-acid chain; its full sequence is MSSAQNIKKSIMAPVLDNNPIALQVLGVCSALAVTTKLETAFVMTLAVTFVTALSNFSVSLIRNHIPNSVRIIVQMAIIASLVIVVDQVLKAYLYDISKQLSVFVGLIITNCIVMGRAEAFAMKSAPVPSLIDGIGNGLGYGFVLITVGFFRELFGSGKLFGMEVLPLVSNGGWYQPNGLMLLAPSAFFLIGFLIWVIRVFKPEQVEAKE.

A run of 5 helical transmembrane segments spans residues 42–62 (FVMT…VSLI), 72–92 (IIVQ…VLKA), 103–123 (VFVG…AFAM), 131–151 (LIDG…VGFF), and 178–198 (NGLM…IWVI).

Belongs to the NqrDE/RnfAE family. In terms of assembly, composed of six subunits; NqrA, NqrB, NqrC, NqrD, NqrE and NqrF.

It localises to the cell inner membrane. It catalyses the reaction a ubiquinone + n Na(+)(in) + NADH + H(+) = a ubiquinol + n Na(+)(out) + NAD(+). NQR complex catalyzes the reduction of ubiquinone-1 to ubiquinol by two successive reactions, coupled with the transport of Na(+) ions from the cytoplasm to the periplasm. NqrA to NqrE are probably involved in the second step, the conversion of ubisemiquinone to ubiquinol. The polypeptide is Na(+)-translocating NADH-quinone reductase subunit D (Vibrio parahaemolyticus serotype O3:K6 (strain RIMD 2210633)).